The sequence spans 358 residues: G-protein coupled receptor 87 (358 aa).

Residues 1 to 47 (MGLNLTLTKLPGNELYSQASHTANSTSEGHGKNSTLHNKFDTIILPV) lie on the Extracellular side of the membrane. 3 N-linked (GlcNAc...) asparagine glycosylation sites follow: Asn-4, Asn-24, and Asn-33. A helical membrane pass occupies residues 48–68 (LYLVIFVASILLNGLAVWIFF). Residues 69 to 75 (HIRNKTS) lie on the Cytoplasmic side of the membrane. The helical transmembrane segment at 76–96 (FIFYLKNIVVADLIMTLTFPF) threads the bilayer. The Extracellular portion of the chain corresponds to 97 to 116 (RIVRDAGFGPWYFEFILCRY). Cys-114 and Cys-192 form a disulfide bridge. Residues 117 to 137 (TSVLFYANMYTSIVFLGLISV) traverse the membrane as a helical segment. Residues 138 to 159 (DRYLKVVKPFGDSRMYSITFTK) lie on the Cytoplasmic side of the membrane. A helical membrane pass occupies residues 160-180 (VLSVCVWVIMAILSLPNIILT). The Extracellular portion of the chain corresponds to 181-208 (NGQPTKENIHDCMKLKSPLGAKWHMAVT). Residues 209–229 (YVDSCLFVAVLVILIGCYIAI) form a helical membrane-spanning segment. Residues 230 to 256 (SRYIHKSSRQFISQSSRKRKHNQSIRV) lie on the Cytoplasmic side of the membrane. The chain crosses the membrane as a helical span at residues 257–277 (VVAVFFTCFLPYHLCRIPFTF). Over 278–297 (SNLDRLLDESAHKILYYCKE) the chain is Extracellular. Residues 298-318 (MTLFLSACNVCLDPIIYFFMC) traverse the membrane as a helical segment. Residues 319–358 (KSFSRRLFKKSNIRTRSESIRSLQSVRRSEVRIYYDYTDV) lie on the Cytoplasmic side of the membrane.

The protein belongs to the G-protein coupled receptor 1 family. In terms of tissue distribution, expressed at high levels in testis and brain and to a lesser extent placenta, ovary, prostate, and skeletal muscle but not in heart, lung, kidney, liver or intestine.

The protein localises to the cell membrane. In terms of biological role, receptor for lysophosphatidic acid (LPA). Necessary for p53/TP53-dependent survival in response to DNA damage. Promotes the Hippo-YAP signaling pathway and thereby modulates glycolysis and oxidative stress production by the regulation of hexokinase-2/HK2. The protein is G-protein coupled receptor 87 (Gpr87) of Mus musculus (Mouse).